The following is a 143-amino-acid chain: MRLEKSLVLIKPDAVERNLIGKILEVYEGAGLKIKAMEMKQINKEFAEKHYEEHRDKQFFNSLIKYITRSPLVALILEGEDAINKIRSLNGATNPEKAEFGTIRRRFALSGTENSVHASDSIESAEKEIKLWFPKVFYEEICG.

ATP is bound by residues Lys11, Phe59, Arg87, Thr93, Arg104, and Asn114. The Pros-phosphohistidine intermediate role is filled by His117.

It belongs to the NDK family. In terms of assembly, homotetramer. The cofactor is Mg(2+).

It is found in the cytoplasm. The enzyme catalyses a 2'-deoxyribonucleoside 5'-diphosphate + ATP = a 2'-deoxyribonucleoside 5'-triphosphate + ADP. It catalyses the reaction a ribonucleoside 5'-diphosphate + ATP = a ribonucleoside 5'-triphosphate + ADP. Its function is as follows. Major role in the synthesis of nucleoside triphosphates other than ATP. The ATP gamma phosphate is transferred to the NDP beta phosphate via a ping-pong mechanism, using a phosphorylated active-site intermediate. The protein is Nucleoside diphosphate kinase of Clostridium perfringens (strain ATCC 13124 / DSM 756 / JCM 1290 / NCIMB 6125 / NCTC 8237 / Type A).